Here is a 563-residue protein sequence, read N- to C-terminus: Arylsulfatase K (563 aa).

A signal peptide spans 1 to 17; it reads MLLLLVSVIVALALVAP. 2 residues coordinate Ca(2+): aspartate 40 and cysteine 80. Cysteine 80 acts as the Nucleophile in catalysis. 3-oxoalanine (Cys) is present on cysteine 80. Asparagine 108 carries N-linked (GlcNAc...) asparagine glycosylation. Lysine 128 contacts substrate. N-linked (GlcNAc...) asparagine glycosylation occurs at asparagine 191. Residue histidine 249 participates in substrate binding. The N-linked (GlcNAc...) asparagine glycan is linked to asparagine 260. Ca(2+)-binding residues include aspartate 311 and histidine 312. 3 N-linked (GlcNAc...) asparagine glycosylation sites follow: asparagine 373, asparagine 411, and asparagine 496.

It belongs to the sulfatase family. Requires Ca(2+) as cofactor. In terms of processing, the conversion to 3-oxoalanine (also known as C-formylglycine, FGly), of a serine or cysteine residue in prokaryotes and of a cysteine residue in eukaryotes, is critical for catalytic activity. Post-translationally, the 75-kDa precursor undergoes proteolytic processing to yield a 23 kDa form. N-glycosylated with both high mannose and complex type sugars.

The protein resides in the secreted. The protein localises to the lysosome. The enzyme catalyses an aryl sulfate + H2O = a phenol + sulfate + H(+). It catalyses the reaction Hydrolysis of the 2-sulfate groups of the 2-O-sulfo-D-glucuronate residues of chondroitin sulfate, heparin and heparitin sulfate.. In terms of biological role, catalyzes the hydrolysis of pseudosubstrates such as p-nitrocatechol sulfate and p-nitrophenyl sulfate. Catalyzes the hydrolysis of the 2-sulfate groups of the 2-O-sulfo-D-glucuronate residues of chondroitin sulfate, heparin and heparitin sulfate. Acts selectively on 2-sulfoglucuronate and lacks activity against 2-sulfoiduronate. The sequence is that of Arylsulfatase K (Arsk) from Rattus norvegicus (Rat).